The sequence spans 334 residues: MNRYYDKNADLNIIKGMKVSIIGYGSQGHAHANNLKDSGVEVVVALRADSASTEKAFVAGLTVKSIEEATDWADLVMVLAPDEFQAKIYTNSIEPNLKQGATLAFAHGFNIHYNRIIPRTDLDVIMIAPKAPGHTVRSEFVKGGGIPDLIAVFQDASGNAKATSLSYACAIGGGRTGILETSFKDETETDLFGEQVVLCGGTTALVQAGFETLVEAGYEPEMAYFECLHELKLIVDLMYEGGIANMRYSISNTAEYGDVTRGPRIVTADTKTEMKKILSEIQDGTFAKEFVANVDELPAHRDVQRKHQIEQVGESLRSMMPWINKNKIVDQSKN.

In terms of domain architecture, KARI N-terminal Rossmann spans 1-181 (MNRYYDKNAD…GGGRTGILET (181 aa)). Residues 24-27 (YGSQ), Arg47, Ser50, Ser52, and 82-85 (DEFQ) each bind NADP(+). His107 is a catalytic residue. NADP(+) is bound at residue Gly133. Residues 182–323 (SFKDETETDL…ESLRSMMPWI (142 aa)) form the KARI C-terminal knotted domain. Residues Asp190, Glu194, Glu226, and Glu230 each coordinate Mg(2+). Position 251 (Ser251) interacts with substrate.

This sequence belongs to the ketol-acid reductoisomerase family. Mg(2+) serves as cofactor.

The enzyme catalyses (2R)-2,3-dihydroxy-3-methylbutanoate + NADP(+) = (2S)-2-acetolactate + NADPH + H(+). The catalysed reaction is (2R,3R)-2,3-dihydroxy-3-methylpentanoate + NADP(+) = (S)-2-ethyl-2-hydroxy-3-oxobutanoate + NADPH + H(+). It participates in amino-acid biosynthesis; L-isoleucine biosynthesis; L-isoleucine from 2-oxobutanoate: step 2/4. The protein operates within amino-acid biosynthesis; L-valine biosynthesis; L-valine from pyruvate: step 2/4. Involved in the biosynthesis of branched-chain amino acids (BCAA). Catalyzes an alkyl-migration followed by a ketol-acid reduction of (S)-2-acetolactate (S2AL) to yield (R)-2,3-dihydroxy-isovalerate. In the isomerase reaction, S2AL is rearranged via a Mg-dependent methyl migration to produce 3-hydroxy-3-methyl-2-ketobutyrate (HMKB). In the reductase reaction, this 2-ketoacid undergoes a metal-dependent reduction by NADPH to yield (R)-2,3-dihydroxy-isovalerate. This is Ketol-acid reductoisomerase (NADP(+)) from Ruthia magnifica subsp. Calyptogena magnifica.